Consider the following 498-residue polypeptide: ATP synthase subunit beta, chloroplastic (498 aa).

172–179 contacts ATP; it reads GGAGVGKT.

This sequence belongs to the ATPase alpha/beta chains family. As to quaternary structure, F-type ATPases have 2 components, CF(1) - the catalytic core - and CF(0) - the membrane proton channel. CF(1) has five subunits: alpha(3), beta(3), gamma(1), delta(1), epsilon(1). CF(0) has four main subunits: a(1), b(1), b'(1) and c(9-12).

It is found in the plastid. The protein resides in the chloroplast thylakoid membrane. The enzyme catalyses ATP + H2O + 4 H(+)(in) = ADP + phosphate + 5 H(+)(out). Its function is as follows. Produces ATP from ADP in the presence of a proton gradient across the membrane. The catalytic sites are hosted primarily by the beta subunits. The polypeptide is ATP synthase subunit beta, chloroplastic (Coffea arabica (Arabian coffee)).